A 162-amino-acid polypeptide reads, in one-letter code: Large ribosomal subunit protein uL10 (162 aa).

Belongs to the universal ribosomal protein uL10 family. As to quaternary structure, part of the ribosomal stalk of the 50S ribosomal subunit. The N-terminus interacts with L11 and the large rRNA to form the base of the stalk. The C-terminus forms an elongated spine to which L12 dimers bind in a sequential fashion forming a multimeric L10(L12)X complex.

Functionally, forms part of the ribosomal stalk, playing a central role in the interaction of the ribosome with GTP-bound translation factors. In Aliarcobacter butzleri (strain RM4018) (Arcobacter butzleri), this protein is Large ribosomal subunit protein uL10.